The chain runs to 128 residues: Aspartate 1-decarboxylase (128 aa).

Serine 25 serves as the catalytic Schiff-base intermediate with substrate; via pyruvic acid. Serine 25 bears the Pyruvic acid (Ser) mark. Threonine 57 lines the substrate pocket. Tyrosine 58 serves as the catalytic Proton donor. 73–75 (GAA) serves as a coordination point for substrate.

The protein belongs to the PanD family. Heterooctamer of four alpha and four beta subunits. Requires pyruvate as cofactor. Post-translationally, is synthesized initially as an inactive proenzyme, which is activated by self-cleavage at a specific serine bond to produce a beta-subunit with a hydroxyl group at its C-terminus and an alpha-subunit with a pyruvoyl group at its N-terminus.

Its subcellular location is the cytoplasm. The catalysed reaction is L-aspartate + H(+) = beta-alanine + CO2. It functions in the pathway cofactor biosynthesis; (R)-pantothenate biosynthesis; beta-alanine from L-aspartate: step 1/1. Functionally, catalyzes the pyruvoyl-dependent decarboxylation of aspartate to produce beta-alanine. This is Aspartate 1-decarboxylase from Ruminiclostridium cellulolyticum (strain ATCC 35319 / DSM 5812 / JCM 6584 / H10) (Clostridium cellulolyticum).